Consider the following 452-residue polypeptide: MDAPARLLAPLLLLCAQQLRGTRAMNDIGDYVGSNLEISWLPNLDGLIAGYARNFRPGIGGPPVNVALALEVASIDHISEANMEYTMTVFLHQSWRDSRLSYNHTNETLGLDSRFVDKLWLPDTFIVNAKSAWFHDVTVENKLIRLQPDGVILYSIRITSTVACDMDLAKYPMDEQECMLDLESYGYSSEDIVYYWSESQEHIHGLDKLQLAQFTITSYRFTTELMNFKSAGQFPRLSLHFHLRRNRGVYIIQSYMPSVLLVAMSWVSFWISQAAVPARVSLGITTVLTMTTLMVSARSSLPRASAIKALDVYFWICYVFVFAALVEYAFAHFNADYRKKQKAKVKVSRPRAEMDVRNAIVLFSLSAAGVTQELAISRRQRRVPGNLMGSYRSVGVETGETKKEGAARSGGQGGIRARLRPIDADTIDIYARAVFPAAFAAVNVIYWAAYAM.

A signal peptide spans 1–24 (MDAPARLLAPLLLLCAQQLRGTRA). Over 25–251 (MNDIGDYVGS…HLRRNRGVYI (227 aa)) the chain is Extracellular. N-linked (GlcNAc...) asparagine glycans are attached at residues Asn103 and Asn106. A disulfide bridge connects residues Cys164 and Cys178. Residues 252–271 (IQSYMPSVLLVAMSWVSFWI) traverse the membrane as a helical segment. Residues 272–275 (SQAA) are Cytoplasmic-facing. Residues 276-298 (VPARVSLGITTVLTMTTLMVSAR) traverse the membrane as a helical segment. The Extracellular segment spans residues 299-308 (SSLPRASAIK). The chain crosses the membrane as a helical span at residues 309–331 (ALDVYFWICYVFVFAALVEYAFA). Residues 332-426 (HFNADYRKKQ…ARLRPIDADT (95 aa)) are Cytoplasmic-facing. Ser390 is subject to Phosphoserine. Residues 427-449 (IDIYARAVFPAAFAAVNVIYWAA) traverse the membrane as a helical segment. At 450 to 452 (YAM) the chain is on the extracellular side.

The protein belongs to the ligand-gated ion channel (TC 1.A.9) family. Gamma-aminobutyric acid receptor (TC 1.A.9.5) subfamily. GABRD sub-subfamily. Heteropentamer, formed by a combination of alpha (GABRA1-6), beta (GABRB1-3), gamma (GABRG1-3), delta (GABRD), epsilon (GABRE), rho (GABRR1-3), pi (GABRP) and theta (GABRQ) chains, each subunit exhibiting distinct physiological and pharmacological properties.

It is found in the cell membrane. The catalysed reaction is chloride(in) = chloride(out). Its function is as follows. Delta subunit of the heteropentameric ligand-gated chloride channel gated by gamma-aminobutyric acid (GABA), a major inhibitory neurotransmitter in the brain. GABA-gated chloride channels, also named GABA(A) receptors (GABAAR), consist of five subunits arranged around a central pore and contain GABA active binding site(s) located at the alpha and beta subunit interface(s). When activated by GABA, GABAARs selectively allow the flow of chloride anions across the cell membrane down their electrochemical gradient. GABAARs containing delta/GABRD subunits are predominantly located in extrasynaptic or perisynaptic positions on hippocampus and cerebellar granule cells, and contribute to the tonic GABAergic inhibition. GABAAR containing alpha-4-beta-3-delta subunits can simultaneously bind GABA and histamine where histamine binds at the interface of two neighboring beta subunits, which may be involved in the regulation of sleep and wakefulness. This Homo sapiens (Human) protein is Gamma-aminobutyric acid receptor subunit delta.